The following is a 346-amino-acid chain: NADPH dehydrogenase (346 aa).

Position 23-26 (23-26 (SPMC)) interacts with FMN. Tyrosine 28 contributes to the substrate binding site. Positions 60 and 102 each coordinate FMN. Position 164–167 (164–167 (HGAH)) interacts with substrate. Residues arginine 215 and 307-308 (GR) contribute to the FMN site.

Belongs to the NADH:flavin oxidoreductase/NADH oxidase family. NamA subfamily. Homotetramer. FMN serves as cofactor.

It carries out the reaction A + NADPH + H(+) = AH2 + NADP(+). Its function is as follows. Catalyzes the reduction of the double bond of an array of alpha,beta-unsaturated aldehydes and ketones. It also reduces the nitro group of nitroester and nitroaromatic compounds. It could have a role in detoxification processes. In Bacillus cytotoxicus (strain DSM 22905 / CIP 110041 / 391-98 / NVH 391-98), this protein is NADPH dehydrogenase.